The following is a 176-amino-acid chain: NAD(P)H-quinone oxidoreductase subunit 6, chloroplastic (176 aa).

Transmembrane regions (helical) follow at residues 10–30, 32–52, 61–81, 95–115, and 152–172; these read FLLVFLGSGLLFGSLGVVLFP, PIFSAFSLGFVLVCISLLYIL, AQLLIYVGAITVLIIFAVMFM, VGDGITSVICTTILFSLISTI, and FFLPFELISIILLVALIGAIS.

Belongs to the complex I subunit 6 family. NDH is composed of at least 16 different subunits, 5 of which are encoded in the nucleus.

The protein localises to the plastid. It is found in the chloroplast thylakoid membrane. The enzyme catalyses a plastoquinone + NADH + (n+1) H(+)(in) = a plastoquinol + NAD(+) + n H(+)(out). It catalyses the reaction a plastoquinone + NADPH + (n+1) H(+)(in) = a plastoquinol + NADP(+) + n H(+)(out). Functionally, NDH shuttles electrons from NAD(P)H:plastoquinone, via FMN and iron-sulfur (Fe-S) centers, to quinones in the photosynthetic chain and possibly in a chloroplast respiratory chain. The immediate electron acceptor for the enzyme in this species is believed to be plastoquinone. Couples the redox reaction to proton translocation, and thus conserves the redox energy in a proton gradient. The polypeptide is NAD(P)H-quinone oxidoreductase subunit 6, chloroplastic (ndhG) (Aethionema cordifolium (Lebanon stonecress)).